Here is a 986-residue protein sequence, read N- to C-terminus: MPENIIAGIPVHFPFEPYDVQRAYMEKVIICLRDGTNGVLESPTGTGKTLSLLCSTLGWIRTRQSEVQLNMQKLQHDQQTQLTGAAGAGAAMGSEIAAVIGKSNNWGVPKVIYASRTHSQLTQAMRELKRTAYANMRAVVLGSRDQLCIHPDVMREQGNSNKVNMCKLKVHAKSCTFQLRVESKKDHPDFRGPSIMDIEDLVKVGQRLKMCPYFASKELVNSADITFMPYNYLLDPKARKANKIELSNAIVILDEGHNIEKICEESASVQIRSSDVAIAIEDVTHIMKIFTSSSDSQDTAGPDEPKDFTIDDLTLLKEMLLELEKAIDGVIVDNKADGATYPASYMYELLGKANFTHGNCATIVALLDKLVQYLMVASQHSMLRKGGSFMVLADLLNIVFANKGDIMSKVSCSFKVHAEIEESKQSQTNNKAQTGWLGKGNNNAASSASKTGRIINFWCFNPGFGMEQLLNTHVRSVILTSGTLAPLKPLIAELAIPVAQHLENPHIVNEAQVYVKIIGTGPDREQLISNYKNRDNPKYISSLGQTILNVSRIVPDGLLVFFPSYPMLNQCVDAWQASGLWADISSRKPIFLEPRGKDQFTSTMEEFYQAIRDSKGACFMAVCRGKVSEGLDFADRNGRAVIITGLPFPPLKDPKVILKRRYLETNRTRENQLLSGNEWYNLEATRAVNQAIGRVIRHRNDYGAILLCDARFQDASQVQQLSKWIRNHLGARPQSSPFGPIVRELRQFFKHAEQTIVQPVERAVEPVLHTICSKKEDQLTLAPITQIKREPGNTGTSKFQLASELAAKVEMANSIKTWTPADYANAAGRNAQSPKAPNPMDFMSRLNSNVTSIDFNADSGRDLVKIHKRERSSPTFHNESMGSKKRYRLINNIAQSELKEAPESRADFLREVRSVINSDQFRSFGKALLAYKTGGDDSFETLMLLLLDVMGAPKLRYLLHGMRRYLKNEHKSEFDVRLASLEAAQL.

One can recognise a Helicase ATP-binding domain in the interval 7-326 (AGIPVHFPFE…KEMLLELEKA (320 aa)). 42–49 (SPTGTGKT) is a binding site for ATP. Positions 148, 166, 175, and 211 each coordinate [4Fe-4S] cluster. Residues 254–257 (DEGH) carry the DEAH box motif. Position 875 is a phosphothreonine (Thr875).

Belongs to the helicase family. RAD3/XPD subfamily.

Its subcellular location is the nucleus. It catalyses the reaction ATP + H2O = ADP + phosphate + H(+). A probable ATP-dependent DNA helicase implicated in DNA repair and the maintenance of genomic stability. Acts as an anti-recombinase to counteract toxic recombination and limit crossover during meiosis. Regulates meiotic recombination and crossover homeostasis by physically dissociating strand invasion events and thereby promotes noncrossover repair by meiotic synthesis dependent strand annealing (SDSA) as well as disassembly of D loop recombination intermediates. The sequence is that of Regulator of telomere elongation helicase 1 homolog from Drosophila grimshawi (Hawaiian fruit fly).